A 1845-amino-acid polypeptide reads, in one-letter code: MSLRGPMKRSHLRQVSAPSVDDLATSSQAQAQSHPRDGGPYNDEHGQDFQSTLDARNIRLSTTSLERRQVSLWVHDETFSREEILFNQAAFSDLGVGPGDVIEILPVRSPGDSLHSIKSDLGLRALRDSYVETGPALLPDPMSKFKTPLQSRCLFVVKPLPQEIKARHPKLEISVTSSVANIFGFKNRTLVHIDVVDRAQCSASHVDIAFRDQFLVRSDMWRLVMSELAEKIIYKGQKIVFMGSIKATVKNIFIREKKVLSGYFSPHTIPVFRSESAKYVLFIQMSREMWDFDSEGTGDILFSRVINGFLPELFKRWANSEAKHLVTIVLFTRVEYDVSAIGAPLPLSSETLRCISSPNHVPTRDFYRVVVNDMASGHWTAILDELKKDFRTFLRDVSTLKMDCADTPTLDGVKVAPKNKAATIAGRPSTALRGNILEAIHLASAHLAYDHIDRDMVHTGTSIIVITPGSGVFEVSYESLSSTSEALANRGIAIDLVCLSPMPLHSVPLFKYKAPAQRSSSSSFCEFNSSGYSPEMRHSFSFASRTPHLSPKSAAHGSFSRGTAHKEHAASRSDEWNYGIPHWLDISYWNPDTYREARRILKKDLNAPIPFTVTKQSKTFVPRVRMYEIQMMGVMESEQSNISIPYLLEGEGIHRAPSLSLGLSPSALSSTRASYRRNPYKLPLSDSLRPEPFLQGLSNPKDVMLARSKKAPKAVLAWMEQYDDAVFQPFAKRRHQRKPSKPKRLSEPDVQVSGAHERLSARSVLRLREHETNANSSERPYPTRTIPRVAETSLSAPQTPVPSKSASPKKPALKPPSAGKAPRISRTISFALRGLSATPPRALASTEVNVEHASALPTSSPKLLPGPFPDTRSVDSFSGSDSASISTVIDTSLRPASPHKTPQSRAIMPSRPISIKVPPRQPSEDAEPGDRAVIPESYSTTSTAIPFNEHHRRDSHTRTSGPRFEMTVNGGSRDSSIKSPQNKALAPWVRSINPCNTSREVLRDTSWFGRWQHAYPRPPHVAVVKWKSLKSPAILPLTTEEFPTAKELGTDYLQTPYRVFPNDDPEGFEVPKTRGILLREMISLRLSHGFQIVIGKHVAEVSGQHALETLNVFNTASLERNGATIFLSKGNSIHRLVCVDGGEIEVTRFTHRTSSALAAGRRDGFSLYSPAMRTILSPEYELKNIKLDPTAEEYNWNYADNYVAGHRDYLFNPAQQLQFWRVRYVLIPMHLHVNTRRHLQSFNEDNEEEIHLLGINQLTHIWQRHKYIPPEEKRFESSNKKKEQNPLNIMYQTRNPSEVVAAELDRILLSDPGLDSSPAQLLPESELLKRSSISLSSLAHIIQGDKGVRMMDRRWHWRLHYNCFIGFELTTWLLQNFRDIDSREEAVDFGNELMKHGLFQHVEKRHNFRDGNYFYQISSEHRISRPESRGGWFPQKRSDKGVPSTPASNNAKDSPLSGHARSDSLEDGPPHTPATPSKSKNKATIMLSKMMKYDVDPRKRSNRPEVIDLHYDRLHNPDNCFHFELSWMNTTPKLIEDTVLSWAATAEKFGLKLVQVPIAEASAISRTQPFRKPYRVSLKIPPPKGPVPTLFNTASFSQPGFTDMHYYHKAMLRKFDFVLDFEARSAFPADVGVSYSWGTPDYQYPQYIHRSGSTLVQLTDEGDFLFLANRLVSTRAAASREMPRYERMDRAEHLRTRAATHDPLDRLSPRLSPIVRPLHEIGSPQVQSSIDSAHLYRAPELIILGFAEFCNDEGRLEQFYKESHARPVSTKVGPATTTLMDSSIPSLELPASVVSHHLSHPPALVARASVDGSISSIDVRVRARNDSVSYKGSPRSGSLRPLNLS.

Residues 1 to 12 are compositionally biased toward basic residues; it reads MSLRGPMKRSHL. Disordered stretches follow at residues 1–48, 547–566, 732–822, and 854–982; these read MSLR…HGQD, PHLS…TAHK, KRRH…GKAP, and SALP…SPQN. Residues 24–33 are compositionally biased toward polar residues; it reads ATSSQAQAQS. Residues 34–47 are compositionally biased toward basic and acidic residues; it reads HPRDGGPYNDEHGQ. Basic residues predominate over residues 732-743; that stretch reads KRRHQRKPSKPK. Residues 755–772 show a composition bias toward basic and acidic residues; it reads AHERLSARSVLRLREHET. Composition is skewed to low complexity over residues 801–822 and 874–886; these read VPSK…GKAP and VDSF…ASIS. A compositionally biased stretch (polar residues) spans 969–982; that stretch reads NGGSRDSSIKSPQN. One can recognise a DEP domain in the interval 1344–1419; sequence GDKGVRMMDR…DGNYFYQISS (76 aa). Disordered stretches follow at residues 1425-1483 and 1825-1845; these read RPES…KNKA and NDSV…LNLS.

It belongs to the IML1 family.

Its subcellular location is the vacuole membrane. This Aspergillus clavatus (strain ATCC 1007 / CBS 513.65 / DSM 816 / NCTC 3887 / NRRL 1 / QM 1276 / 107) protein is Vacuolar membrane-associated protein iml1 (iml1).